The chain runs to 401 residues: Coenzyme A biosynthesis bifunctional protein CoaBC (401 aa).

Residues 1–190 form a phosphopantothenoylcysteine decarboxylase region; sequence MQTLAGKKIL…FQPKPLQDKS (190 aa). Residue Cys-159 is the Proton donor of the active site. The interval 191 to 401 is phosphopantothenate--cysteine ligase; it reads ILITAGPTRE…LKQIQTLMGH (211 aa). CTP contacts are provided by residues Asp-279, Lys-289, 307 to 310, Phe-326, Lys-340, and Lys-344; that span reads PDIV.

The protein in the N-terminal section; belongs to the HFCD (homo-oligomeric flavin containing Cys decarboxylase) superfamily. In the C-terminal section; belongs to the PPC synthetase family. The cofactor is Mg(2+). FMN serves as cofactor.

It carries out the reaction N-[(R)-4-phosphopantothenoyl]-L-cysteine + H(+) = (R)-4'-phosphopantetheine + CO2. The enzyme catalyses (R)-4'-phosphopantothenate + L-cysteine + CTP = N-[(R)-4-phosphopantothenoyl]-L-cysteine + CMP + diphosphate + H(+). It participates in cofactor biosynthesis; coenzyme A biosynthesis; CoA from (R)-pantothenate: step 2/5. Its pathway is cofactor biosynthesis; coenzyme A biosynthesis; CoA from (R)-pantothenate: step 3/5. Functionally, catalyzes two sequential steps in the biosynthesis of coenzyme A. In the first step cysteine is conjugated to 4'-phosphopantothenate to form 4-phosphopantothenoylcysteine. In the second step the latter compound is decarboxylated to form 4'-phosphopantotheine. This chain is Coenzyme A biosynthesis bifunctional protein CoaBC, found in Vibrio vulnificus (strain YJ016).